Consider the following 401-residue polypeptide: MRTLWQHCHVATMADGRYSAIEDAAIVTSAGLIEWIGPRAELAPVEADRTVDLGGAWVTPGLIDCHTHAVFGGNRSGEFEQRLQGVSYAEIAAQGGGIASTVRATRAASEDELFASAHQRVQALMRDGVTTLEIKSGYGLDLANERKMLRVARRLADELPLTVRATCLAAHALPPEYAGRADDYIAHICDEMLPALAGEGLVDAVDAFCEHLAFSPAQVERLFIKARELGLPVKLHAEQLSSLHGSSLAARYQALSADHLEFMTEEDAVAMASAGTVAVLLPGAFYFLRETQLPPMDALRRHGVKIALASDLNPGTSPGLSLRLMLNMGCTCFRMTPEEALAGVTVHAATALGLGDSHGSLQVGKVADFVAWQIERPADLAYWLGGDLPKRVVRMGHEISN.

Fe(3+) contacts are provided by His-66 and His-68. Zn(2+) is bound by residues His-66 and His-68. 4-imidazolone-5-propanoate is bound by residues Arg-75, Tyr-138, and His-171. Tyr-138 contacts N-formimidoyl-L-glutamate. His-236 contributes to the Fe(3+) binding site. His-236 is a binding site for Zn(2+). A 4-imidazolone-5-propanoate-binding site is contributed by Gln-239. Asp-311 is a binding site for Fe(3+). Asp-311 lines the Zn(2+) pocket. N-formimidoyl-L-glutamate-binding residues include Asn-313 and Gly-315. Residue Thr-316 participates in 4-imidazolone-5-propanoate binding.

This sequence belongs to the metallo-dependent hydrolases superfamily. HutI family. Requires Zn(2+) as cofactor. Fe(3+) is required as a cofactor.

It localises to the cytoplasm. It catalyses the reaction 4-imidazolone-5-propanoate + H2O = N-formimidoyl-L-glutamate. It functions in the pathway amino-acid degradation; L-histidine degradation into L-glutamate; N-formimidoyl-L-glutamate from L-histidine: step 3/3. Functionally, catalyzes the hydrolytic cleavage of the carbon-nitrogen bond in imidazolone-5-propanoate to yield N-formimidoyl-L-glutamate. It is the third step in the universal histidine degradation pathway. This is Imidazolonepropionase from Pseudomonas putida (strain ATCC 47054 / DSM 6125 / CFBP 8728 / NCIMB 11950 / KT2440).